Here is a 379-residue protein sequence, read N- to C-terminus: Beta-1,3-N-acetylglucosaminyltransferase lunatic fringe (379 aa).

The Cytoplasmic segment spans residues 1–8 (MLKRCGRR). The helical; Signal-anchor for type II membrane protein transmembrane segment at 9–29 (LLLALAGALLACLLVLTADPP) threads the bilayer. The Lumenal segment spans residues 30–379 (PPPLPAERGR…TPWCPRTAIF (350 aa)). Positions 86 to 107 (RDAGPPPGAAPRPADGHPRPLA) are disordered. R129 serves as a coordination point for substrate. N-linked (GlcNAc...) asparagine glycosylation occurs at N167. 2 disulfide bridges follow: C168–C179 and C197–C260. D201 is a substrate binding site. Mn(2+) is bound at residue D202. D290 is a catalytic residue. H314 serves as a coordination point for Mn(2+). C364 and C373 are joined by a disulfide.

The protein belongs to the glycosyltransferase 31 family. The cofactor is Mn(2+). Co(2+) is required as a cofactor. Post-translationally, a soluble form may be derived from the membrane form by proteolytic processing.

The protein localises to the golgi apparatus. Its subcellular location is the golgi apparatus membrane. The catalysed reaction is 3-O-(alpha-L-fucosyl)-L-threonyl-[EGF-like domain protein] + UDP-N-acetyl-alpha-D-glucosamine = 3-O-(N-acetyl-beta-D-glucosaminyl-(1-&gt;3)-alpha-L-fucosyl)-L-threonyl-[EGF-like domain protein] + UDP + H(+). It catalyses the reaction 3-O-(alpha-L-fucosyl)-L-seryl-[EGF-like domain protein] + UDP-N-acetyl-alpha-D-glucosamine = 3-O-(N-acetyl-beta-D-glucosaminyl-(1-&gt;3)-alpha-L-fucosyl)-L-seryl-[EGF-like domain protein] + UDP + H(+). In terms of biological role, glycosyltransferase that initiates the elongation of O-linked fucose residues attached to EGF-like repeats in the extracellular domain of Notch molecules. Modulates NOTCH1 activity by modifying O-fucose residues at specific EGF-like domains resulting in inhibition of NOTCH1 activation by JAG1 and enhancement of NOTCH1 activation by DLL1 via an increase in its binding to DLL1. Decreases the binding of JAG1 to NOTCH2 but not that of DLL1. Essential mediator of somite segmentation and patterning. The sequence is that of Beta-1,3-N-acetylglucosaminyltransferase lunatic fringe from Homo sapiens (Human).